A 292-amino-acid polypeptide reads, in one-letter code: 4-amino-L-phenylalanine/4-methylamino-L-phenylalanine methyltransferase (292 aa).

128–132 (CAGPG) provides a ligand contact to S-adenosyl-L-methionine.

It belongs to the protein N5-glutamine methyltransferase family.

The enzyme catalyses 4-amino-L-phenylalanine + S-adenosyl-L-methionine = 4-methylamino-L-phenylalanine + S-adenosyl-L-homocysteine + H(+). The catalysed reaction is 4-methylamino-L-phenylalanine + S-adenosyl-L-methionine = 4-dimethylamino-L-phenylalanine + S-adenosyl-L-homocysteine + H(+). It participates in antibiotic biosynthesis. Its function is as follows. Involved in pristinamycin I biosynthesis. Catalyzes the SAM-dependent methylation of 4-amino-L-phenylalanine (PAPA) to 4-methylamino-L-phenylalanine (MMPAPA), and of MMPAPA to 4-dimethylamino-L-phenylalanine (DMPAPA). This is 4-amino-L-phenylalanine/4-methylamino-L-phenylalanine methyltransferase from Streptomyces pristinaespiralis.